The chain runs to 130 residues: Glycoprotein hormone alpha-2 (130 aa).

The first 22 residues, 1–22 (MPMAPRVLLFCLLGLAVTEGHG), serve as a signal peptide directing secretion. 4 disulfide bridges follow: cysteine 32/cysteine 90, cysteine 49/cysteine 104, cysteine 58/cysteine 120, and cysteine 62/cysteine 122. Residues asparagine 38 and asparagine 82 are each glycosylated (N-linked (GlcNAc...) asparagine).

This sequence belongs to the glycoprotein hormones subunit alpha family. As to quaternary structure, heterodimer with GPHB5; this heterodimer interacts with thyroid-stimulating hormone receptor (TSHR), and hence stimulates cAMP production.

It is found in the secreted. In terms of biological role, functions as a heterodimeric glycoprotein hormone with GPHB5 able to bind and activate the thyroid-stimulating hormone receptor (TSHR), leading to increased cAMP production. Plays a central role in controlling thyroid cell metabolism. The sequence is that of Glycoprotein hormone alpha-2 (Gpha2) from Rattus norvegicus (Rat).